The following is a 262-amino-acid chain: Small ribosomal subunit protein uS2 (262 aa).

Residues 228–262 are disordered; the sequence is VSNEEVAAEQNINLDDKEESEQAETTEENTSVESN. Residues 243–254 are compositionally biased toward acidic residues; the sequence is DKEESEQAETTE.

It belongs to the universal ribosomal protein uS2 family.

The sequence is that of Small ribosomal subunit protein uS2 from Staphylococcus epidermidis (strain ATCC 35984 / DSM 28319 / BCRC 17069 / CCUG 31568 / BM 3577 / RP62A).